Consider the following 631-residue polypeptide: ATP-dependent zinc metalloprotease FtsH (631 aa).

Topologically, residues 1–5 are cytoplasmic; that stretch reads MKKSN. A helical membrane pass occupies residues 6–26; the sequence is PWFVFFWITLLVIVLMFINFA. At 27-102 the chain is on the periplasmic side; it reads RQGGNEVELE…LEFSATEKSG (76 aa). A helical transmembrane segment spans residues 103-123; it reads WLGSLLLNWGPVVLLILFCFW. Over 124–631 the chain is Cytoplasmic; that stretch reads MMRGMSMGNK…KVINEKVIIS (508 aa). ATP is bound at residue 196–203; that stretch reads GSPGTGKT. Histidine 418 contributes to the Zn(2+) binding site. Glutamate 419 is a catalytic residue. The Zn(2+) site is built by histidine 422 and aspartate 494.

It in the central section; belongs to the AAA ATPase family. The protein in the C-terminal section; belongs to the peptidase M41 family. In terms of assembly, homohexamer. Zn(2+) serves as cofactor.

The protein localises to the cell inner membrane. Functionally, acts as a processive, ATP-dependent zinc metallopeptidase for both cytoplasmic and membrane proteins. Plays a role in the quality control of integral membrane proteins. The protein is ATP-dependent zinc metalloprotease FtsH of Endomicrobium trichonymphae.